The chain runs to 481 residues: Rho GTPase-activating protein 15 (481 aa).

Phosphoserine is present on residues serine 51, serine 111, serine 204, serine 207, and serine 249. The region spanning 87–197 (MVEKEGYLQK…WFQAIKNAID (111 aa)) is the PH domain. Residues 287-476 (SHLHTVCERE…FMLTEYDKIF (190 aa)) enclose the Rho-GAP domain.

It is found in the cytoplasm. The protein localises to the membrane. GTPase activator for the Rho-type GTPases by converting them to an inactive GDP-bound state. Has activity toward RAC1. Overexpression results in an increase in actin stress fibers and cell contraction. The sequence is that of Rho GTPase-activating protein 15 (Arhgap15) from Mus musculus (Mouse).